A 91-amino-acid chain; its full sequence is Small ribosomal subunit protein bS20 (91 aa).

This sequence belongs to the bacterial ribosomal protein bS20 family.

Its function is as follows. Binds directly to 16S ribosomal RNA. This Caulobacter vibrioides (strain ATCC 19089 / CIP 103742 / CB 15) (Caulobacter crescentus) protein is Small ribosomal subunit protein bS20.